The chain runs to 264 residues: Thymidylate synthase (264 aa).

Arg-21 lines the dUMP pocket. Residue His-51 participates in (6R)-5,10-methylene-5,6,7,8-tetrahydrofolate binding. 126–127 (RR) contributes to the dUMP binding site. Cys-146 (nucleophile) is an active-site residue. Residues 166 to 169 (RSAD), Asn-177, and 207 to 209 (HLY) each bind dUMP. Position 169 (Asp-169) interacts with (6R)-5,10-methylene-5,6,7,8-tetrahydrofolate. Ala-263 provides a ligand contact to (6R)-5,10-methylene-5,6,7,8-tetrahydrofolate.

It belongs to the thymidylate synthase family. Bacterial-type ThyA subfamily. As to quaternary structure, homodimer.

The protein localises to the cytoplasm. The catalysed reaction is dUMP + (6R)-5,10-methylene-5,6,7,8-tetrahydrofolate = 7,8-dihydrofolate + dTMP. Its pathway is pyrimidine metabolism; dTTP biosynthesis. Catalyzes the reductive methylation of 2'-deoxyuridine-5'-monophosphate (dUMP) to 2'-deoxythymidine-5'-monophosphate (dTMP) while utilizing 5,10-methylenetetrahydrofolate (mTHF) as the methyl donor and reductant in the reaction, yielding dihydrofolate (DHF) as a by-product. This enzymatic reaction provides an intracellular de novo source of dTMP, an essential precursor for DNA biosynthesis. The protein is Thymidylate synthase of Legionella pneumophila (strain Corby).